The primary structure comprises 220 residues: 7-cyano-7-deazaguanine synthase (220 aa).

Residue 10-20 participates in ATP binding; the sequence is FSGGQDSTTCL. Positions 186, 195, 198, and 201 each coordinate Zn(2+).

This sequence belongs to the QueC family. In terms of assembly, homodimer. It depends on Zn(2+) as a cofactor.

It catalyses the reaction 7-carboxy-7-deazaguanine + NH4(+) + ATP = 7-cyano-7-deazaguanine + ADP + phosphate + H2O + H(+). The protein operates within purine metabolism; 7-cyano-7-deazaguanine biosynthesis. In terms of biological role, catalyzes the ATP-dependent conversion of 7-carboxy-7-deazaguanine (CDG) to 7-cyano-7-deazaguanine (preQ(0)). The chain is 7-cyano-7-deazaguanine synthase from Bacillus cereus (strain B4264).